Consider the following 820-residue polypeptide: Potassium channel GORK (820 aa).

Topologically, residues 1 to 69 (MGRLRRRQEI…PKNRWYKAWE (69 aa)) are cytoplasmic. Residues 70-90 (MFILVWAIYSSLFTPMEFGFF) traverse the membrane as a helical segment. Residues 91–97 (RGLPERL) lie on the Extracellular side of the membrane. Residues 98 to 118 (FVLDIVGQIAFLVDIVLQFFV) traverse the membrane as a helical segment. The Cytoplasmic segment spans residues 119-141 (AYRDTQTYRTVYKPTRIAFRYLK). Residues 142–162 (SHFLMDFIGCFPWDLIYKASG) traverse the membrane as a helical segment. Over 163-168 (KHELVR) the chain is Extracellular. The chain crosses the membrane as a helical; Voltage-sensor span at residues 169-189 (YLLWIRLFRVRKVVEFFQRLE). Over 190–203 (KDTRINYLFTRILK) the chain is Cytoplasmic. Residues 204–224 (LLFVEVYCTHTAACIFYYLAT) traverse the membrane as a helical segment. Topologically, residues 225 to 259 (TLPPENEGYTWIGSLKLGDYSYENFREIDLWKRYT) are extracellular. An intramembrane region (pore-forming) is located at residues 260-279 (TALYFAIVTMATVGYGDIHA). Residues 280 to 285 (VNLREM) lie on the Extracellular side of the membrane. Residues 286-306 (IFVMIYVSFDMVLGAYLIGNI) form a helical membrane-spanning segment. Residues 307 to 820 (TALIVKGSNT…YMISDTTDQT (514 aa)) are Cytoplasmic-facing. Position 386–508 (386–508 (LFKGCSTEFI…ILNNIMEEKE (123 aa))) interacts with a nucleoside 3',5'-cyclic phosphate. 6 ANK repeats span residues 528 to 559 (EAELALKVNSAAFQGDFYQLKSLIRSGADPNK), 563 to 592 (DGRSPLHLAACRGYEDITLFLIQEGVDVNL), 596 to 625 (FGHTPLFEAVKAGQEGVIGLLVKEGASFNL), 627 to 656 (DSGNFLCTTVAKGDSDFLKRLLSSGMNPNS), 660 to 689 (DHRTPLHVAASEGLFLMAKMLVEAGASVIS), and 693 to 722 (WGNSPLDEARLCGNKKLIKLLEDVKNAQSS). The KHA domain occupies 740–820 (KCTVFPFHPQ…YMISDTTDQT (81 aa)).

Belongs to the potassium channel family. Plant (TC 1.A.1.4) subfamily. The potassium channel is probably composed of a homo- or heterotetrameric complex of pore-forming subunits. Expressed in guard cell-containing tissues, in root epidermal cells and in root hairs. Detected in vascular cells of the root and shoot.

It localises to the membrane. Functionally, major selective outward-rectifying potassium channel of the guard cell membrane. Involved in regulation of stomatal movements according to the water status. Assuming opened or closed conformations in response to the voltage difference across the membrane, the channel is activated by depolarization. Conductance of the channel is modulated in a potassium-dependent fashion. May interact with the cytoskeleton or with regulatory proteins. The protein is Potassium channel GORK (GORK) of Arabidopsis thaliana (Mouse-ear cress).